We begin with the raw amino-acid sequence, 277 residues long: Glycerol-3-phosphate acyltransferase (277 aa).

A run of 5 helical transmembrane segments spans residues 3–23, 55–75, 79–99, 111–131, and 155–175; these read LFIF…AIIV, IMVM…AKLL, PVTV…PVFF, IGAL…TWLL, and LILV…ILVL. Residues 207 to 277 form a disordered region; that stretch reads SPATSAEQEF…PKTKTVKEKE (71 aa). The segment covering 216–239 has biased composition (basic and acidic residues); it reads FPGKEVIDTNIDETEKTEQAEAVK. Basic residues-rich tracts occupy residues 240-253 and 262-271; these read KPKA…AKKT and KPRSTKPKTK.

Belongs to the PlsY family. As to quaternary structure, probably interacts with PlsX.

Its subcellular location is the cell inner membrane. It catalyses the reaction an acyl phosphate + sn-glycerol 3-phosphate = a 1-acyl-sn-glycero-3-phosphate + phosphate. The protein operates within lipid metabolism; phospholipid metabolism. In terms of biological role, catalyzes the transfer of an acyl group from acyl-phosphate (acyl-PO(4)) to glycerol-3-phosphate (G3P) to form lysophosphatidic acid (LPA). This enzyme utilizes acyl-phosphate as fatty acyl donor, but not acyl-CoA or acyl-ACP. This is Glycerol-3-phosphate acyltransferase from Legionella pneumophila (strain Paris).